A 135-amino-acid polypeptide reads, in one-letter code: Large ribosomal subunit protein mL41B (135 aa).

A mitochondrion-targeting transit peptide spans 1 to 13 (MGLITKIARGLVR).

This sequence belongs to the mitochondrion-specific ribosomal protein mL41 family. Component of the mitochondrial ribosome large subunit (39S) which comprises a 16S rRNA and about 50 distinct proteins.

Its subcellular location is the mitochondrion. Functionally, component of the mitochondrial ribosome large subunit. Also involved in apoptosis and cell cycle. The protein is Large ribosomal subunit protein mL41B (mrpl41-b) of Xenopus laevis (African clawed frog).